The following is a 734-amino-acid chain: Photosystem I P700 chlorophyll a apoprotein A2 (734 aa).

Transmembrane regions (helical) follow at residues 46-69, 135-158, 175-199, 273-291, 330-353, 369-395, 417-439, and 517-535; these read IFAS…FHVA, LYTG…FHLQ, LNHH…HVAI, IAHH…GHMY, LHFQ…QHMY, AALY…IFFI, AIIS…LYVH, and FLVH…LILV. C559 and C568 together coordinate [4Fe-4S] cluster. Transmembrane regions (helical) follow at residues 575 to 596 and 643 to 665; these read AFYL…YWHW and LSVW…MFLI. H654, M662, and Y670 together coordinate chlorophyll a. W671 contacts phylloquinone. Residues 707–727 form a helical membrane-spanning segment; the sequence is LVGLAHFSVGYIFTYAAFLIA.

The protein belongs to the PsaA/PsaB family. As to quaternary structure, the PsaA/B heterodimer binds the P700 chlorophyll special pair and subsequent electron acceptors. PSI consists of a core antenna complex that captures photons, and an electron transfer chain that converts photonic excitation into a charge separation. The eukaryotic PSI reaction center is composed of at least 11 subunits. P700 is a chlorophyll a/chlorophyll a' dimer, A0 is one or more chlorophyll a, A1 is one or both phylloquinones and FX is a shared 4Fe-4S iron-sulfur center. serves as cofactor.

It is found in the plastid. The protein resides in the chloroplast thylakoid membrane. It catalyses the reaction reduced [plastocyanin] + hnu + oxidized [2Fe-2S]-[ferredoxin] = oxidized [plastocyanin] + reduced [2Fe-2S]-[ferredoxin]. Its function is as follows. PsaA and PsaB bind P700, the primary electron donor of photosystem I (PSI), as well as the electron acceptors A0, A1 and FX. PSI is a plastocyanin-ferredoxin oxidoreductase, converting photonic excitation into a charge separation, which transfers an electron from the donor P700 chlorophyll pair to the spectroscopically characterized acceptors A0, A1, FX, FA and FB in turn. Oxidized P700 is reduced on the lumenal side of the thylakoid membrane by plastocyanin. The protein is Photosystem I P700 chlorophyll a apoprotein A2 of Jasminum nudiflorum (Winter jasmine).